A 446-amino-acid polypeptide reads, in one-letter code: D(1A) dopamine receptor (446 aa).

Topologically, residues Met1–Arg22 are extracellular. Asn4 carries an N-linked (GlcNAc...) asparagine glycan. The helical transmembrane segment at Ile23–Ile48 threads the bilayer. Topologically, residues Arg49–Asn59 are cytoplasmic. The helical transmembrane segment at Phe60–Ala86 threads the bilayer. Topologically, residues Gly87 to Cys95 are extracellular. Cys95 and Cys185 are oxidised to a cystine. Residues Asn96–Val118 traverse the membrane as a helical segment. Residues Asp119–Lys137 are Cytoplasmic-facing. The chain crosses the membrane as a helical span at residues Ala138–Trp162. The Extracellular portion of the chain corresponds to His163–Arg191. The chain crosses the membrane as a helical span at residues Thr192–Tyr217. The Cytoplasmic segment spans residues Arg218–Lys271. A helical membrane pass occupies residues Thr272 to Glu298. Residues Ser299 to Thr315 lie on the Extracellular side of the membrane. The helical transmembrane segment at Phe316 to Phe340 threads the bilayer. The Cytoplasmic segment spans residues Arg341–Thr446. 2 S-palmitoyl cysteine lipidation sites follow: Cys350 and Cys354.

It belongs to the G-protein coupled receptor 1 family. As to quaternary structure, interacts with DNAJC14 via its C-terminus.

Its subcellular location is the cell membrane. The protein localises to the endoplasmic reticulum membrane. It is found in the cell projection. It localises to the cilium membrane. The protein resides in the dendrite. Its subcellular location is the dendritic spine. Functionally, this is one of the five types (D1 to D5) of receptors for dopamine. The activity of this receptor is mediated by G proteins which activate adenylyl cyclase. In Didelphis virginiana (North American opossum), this protein is D(1A) dopamine receptor (DRD1).